We begin with the raw amino-acid sequence, 235 residues long: Small ribosomal subunit protein uS3 (235 aa).

The KH type-2 domain occupies 39-107 (IREILHKELK…DVVINIVEIR (69 aa)). A disordered region spans residues 215–235 (QDKRMAEGDGGGSSRPRRDAA).

It belongs to the universal ribosomal protein uS3 family. In terms of assembly, part of the 30S ribosomal subunit. Forms a tight complex with proteins S10 and S14.

Functionally, binds the lower part of the 30S subunit head. Binds mRNA in the 70S ribosome, positioning it for translation. The sequence is that of Small ribosomal subunit protein uS3 from Rhodopseudomonas palustris (strain ATCC BAA-98 / CGA009).